Reading from the N-terminus, the 39-residue chain is Photosystem I reaction center subunit IX (39 aa).

The chain crosses the membrane as a helical span at residues 4 to 24 (FLTTAPVVAAIWFTLTAGILI).

It belongs to the PsaJ family.

It localises to the cellular thylakoid membrane. In terms of biological role, may help in the organization of the PsaE and PsaF subunits. This is Photosystem I reaction center subunit IX from Synechococcus sp. (strain CC9311).